Reading from the N-terminus, the 333-residue chain is Nucleoid-associated protein PSPTO_1265 (333 aa).

It belongs to the YejK family.

It is found in the cytoplasm. It localises to the nucleoid. The polypeptide is Nucleoid-associated protein PSPTO_1265 (Pseudomonas syringae pv. tomato (strain ATCC BAA-871 / DC3000)).